The primary structure comprises 515 residues: uncharacterized protein (515 aa).

A run of 3 helical transmembrane segments spans residues 1–21 (MSFVVAAPEVVVAAASDLAGI), 165–185 (IGGPGATGLAGGAGGVGGLLF), and 199–219 (GPVGATGGIGGPGGAAVGLFG). The region spanning 1-93 (MSFVVAAPEV…AGAYAGAEAA (93 aa)) is the PE domain. Over residues 349–360 (GGTLIGNGGDGG) the composition is skewed to gly residues. Disordered regions lie at residues 349–368 (GGTLIGNGGDGGNSVQTDGF) and 463–515 (GVSG…SPGG).

This sequence belongs to the mycobacterial PE family. PGRS subfamily.

It localises to the cell membrane. This is an uncharacterized protein from Mycobacterium tuberculosis (strain CDC 1551 / Oshkosh).